Here is a 402-residue protein sequence, read N- to C-terminus: Protein FAM221B (402 aa).

Over residues 1–35 the composition is skewed to basic and acidic residues; the sequence is MEAHEIIEEPHITMDAEKHPPSKDPSAEDLQENHI. Disordered regions lie at residues 1 to 205 and 378 to 402; these read MEAH…TARP and DTQK…HRPL. Composition is skewed to polar residues over residues 77-90 and 393-402; these read EPSI…TPTY and DTVSNWHRPL.

This sequence belongs to the FAM221 family.

This chain is Protein FAM221B (FAM221B), found in Homo sapiens (Human).